Reading from the N-terminus, the 75-residue chain is Translation initiation factor IF-1 1 (75 aa).

An S1-like domain is found at 1–74; sequence MARSDMIEVD…TRGRIVYRYR (74 aa).

Belongs to the IF-1 family. In terms of assembly, component of the 30S ribosomal translation pre-initiation complex which assembles on the 30S ribosome in the order IF-2 and IF-3, IF-1 and N-formylmethionyl-tRNA(fMet); mRNA recruitment can occur at any time during PIC assembly.

Its subcellular location is the cytoplasm. One of the essential components for the initiation of protein synthesis. Stabilizes the binding of IF-2 and IF-3 on the 30S subunit to which N-formylmethionyl-tRNA(fMet) subsequently binds. Helps modulate mRNA selection, yielding the 30S pre-initiation complex (PIC). Upon addition of the 50S ribosomal subunit IF-1, IF-2 and IF-3 are released leaving the mature 70S translation initiation complex. This is Translation initiation factor IF-1 1 from Symbiobacterium thermophilum (strain DSM 24528 / JCM 14929 / IAM 14863 / T).